Reading from the N-terminus, the 352-residue chain is C-C chemokine receptor type 5 (352 aa).

Over 1–30 (MDYQVSSPTYDIDYYTSEPCQKINVKQIAA) the chain is Extracellular. At Y3 the chain carries Sulfotyrosine. S6 and S7 each carry an O-linked (GalNAc...) serine glycan. Y10, Y14, and Y15 each carry sulfotyrosine. 2 disulfides stabilise this stretch: C20–C269 and C101–C178. Residues 31–58 (RLLPPLYSLVFIFGFVGNILVVLILINC) traverse the membrane as a helical segment. The Cytoplasmic portion of the chain corresponds to 59–68 (KRLKSMTDIY). A helical membrane pass occupies residues 69-89 (LLNLAISDLLFLLTVPFWAHY). Residues 90 to 102 (AAAQWDFGNTMCQ) are Extracellular-facing. The helical transmembrane segment at 103-124 (LLTGLYFIGFFSGIFFIILLTI) threads the bilayer. Over 125 to 141 (DRYLAIVHAVFALKART) the chain is Cytoplasmic. Residues 142 to 166 (VTFGVVTSVITWVVAVFASLPGIIF) form a helical membrane-spanning segment. Over 167–198 (TRSQREGLHYTCSSHFPYSQYQFWKNFQTLKM) the chain is Extracellular. A helical membrane pass occupies residues 199–218 (VILGLVLPLLVMVICYSGIL). Over 219 to 235 (KTLLRCRNEKKRHRAVR) the chain is Cytoplasmic. A helical transmembrane segment spans residues 236–260 (LIFTIMIVYFLFWAPYNIVLLLNTF). The Extracellular segment spans residues 261–277 (QEFFGLNNCSSSNRLDQ). The chain crosses the membrane as a helical span at residues 278–301 (AMQVTETLGMTHCCINPIIYAFVG). Residues 302-352 (EKFRNYLLVFFQKHIAKRFCKCCSIFQQEAPERASSVYTRSTAEQEISVGL) are Cytoplasmic-facing. 3 S-palmitoyl cysteine lipidation sites follow: C321, C323, and C324. Phosphoserine; by BARK1 is present on residues S336, S337, S342, and S349.

Belongs to the G-protein coupled receptor 1 family. Interacts with PRAF2. Efficient ligand binding to CCL3/MIP-1alpha and CCL4/MIP-1beta requires sulfation, O-glycosylation and sialic acid modifications. Glycosylation on Ser-6 is required for efficient binding of CCL4. Interacts with GRK2. Interacts with ARRB1 and ARRB2. Interacts with CNIH4. Interacts with S100A4; this interaction stimulates T-lymphocyte chemotaxis. Sulfated on at least 2 of the N-terminal tyrosines. Sulfation is required for efficient binding of the chemokines, CCL3 and CCL4. Post-translationally, palmitoylation in the C-terminal is important for cell surface expression. In terms of processing, phosphorylation on serine residues in the C-terminal is stimulated by binding CC chemokines especially by APO-RANTES. O-glycosylated, but not N-glycosylated. Ser-6 appears to be the major site even if Ser-7 may be also O-glycosylated. Also sialylated glycans present which contribute to chemokine binding. Thr-16 and Ser-17 may also be glycosylated and, if so, with small moieties such as a T-antigen.

The protein resides in the cell membrane. Receptor for a number of inflammatory CC-chemokines including CCL3/MIP-1-alpha, CCL4/MIP-1-beta and RANTES and subsequently transduces a signal by increasing the intracellular calcium ion level. May play a role in the control of granulocytic lineage proliferation or differentiation. Participates in T-lymphocyte migration to the infection site by acting as a chemotactic receptor. This is C-C chemokine receptor type 5 (CCR5) from Macaca arctoides (Stump-tailed macaque).